The sequence spans 99 residues: Aspartyl/glutamyl-tRNA(Asn/Gln) amidotransferase subunit C (99 aa).

This sequence belongs to the GatC family. As to quaternary structure, heterotrimer of A, B and C subunits.

It catalyses the reaction L-glutamyl-tRNA(Gln) + L-glutamine + ATP + H2O = L-glutaminyl-tRNA(Gln) + L-glutamate + ADP + phosphate + H(+). It carries out the reaction L-aspartyl-tRNA(Asn) + L-glutamine + ATP + H2O = L-asparaginyl-tRNA(Asn) + L-glutamate + ADP + phosphate + 2 H(+). Functionally, allows the formation of correctly charged Asn-tRNA(Asn) or Gln-tRNA(Gln) through the transamidation of misacylated Asp-tRNA(Asn) or Glu-tRNA(Gln) in organisms which lack either or both of asparaginyl-tRNA or glutaminyl-tRNA synthetases. The reaction takes place in the presence of glutamine and ATP through an activated phospho-Asp-tRNA(Asn) or phospho-Glu-tRNA(Gln). The protein is Aspartyl/glutamyl-tRNA(Asn/Gln) amidotransferase subunit C of Cupriavidus necator (strain ATCC 17699 / DSM 428 / KCTC 22496 / NCIMB 10442 / H16 / Stanier 337) (Ralstonia eutropha).